The primary structure comprises 508 residues: Glycerol kinase (508 aa).

Thr14 provides a ligand contact to ADP. ATP contacts are provided by Thr14, Thr15, and Ser16. Residue Thr14 participates in sn-glycerol 3-phosphate binding. Arg18 contributes to the ADP binding site. Sn-glycerol 3-phosphate is bound by residues Arg84, Glu85, Tyr134, and Asp247. 5 residues coordinate glycerol: Arg84, Glu85, Tyr134, Asp247, and Gln248. Thr269 and Gly313 together coordinate ADP. 4 residues coordinate ATP: Thr269, Gly313, Gln317, and Gly416. Gly416 lines the ADP pocket.

It belongs to the FGGY kinase family.

It carries out the reaction glycerol + ATP = sn-glycerol 3-phosphate + ADP + H(+). It functions in the pathway polyol metabolism; glycerol degradation via glycerol kinase pathway; sn-glycerol 3-phosphate from glycerol: step 1/1. With respect to regulation, inhibited by fructose 1,6-bisphosphate (FBP). Functionally, key enzyme in the regulation of glycerol uptake and metabolism. Catalyzes the phosphorylation of glycerol to yield sn-glycerol 3-phosphate. The polypeptide is Glycerol kinase (Mycoplasmoides gallisepticum (strain R(low / passage 15 / clone 2)) (Mycoplasma gallisepticum)).